The following is a 268-amino-acid chain: MERYESLFAQLKERKEGAFVPFVTLGDPGIEQSLKIIDTLIEAGADALELGIPFSDPLADGPTIQNATLRAFAAGVTPAQCFEMLALIRQKHPTIPIGLLMYANLVFNKGIDEFYAQCEKVGVDSVLVADVPVEESAPFRQAALCHNVAPIFICPPNADDDLLRQIASYGRGYTYLLSRAGVTGAENRAALPLNHLVAKLKEYNAAPPLQGFGISAPDQVKAAIDAGAAGAISGSAIVKIIEQHINEPEKMLAALKVFVQPMKAATRS.

Catalysis depends on proton acceptor residues glutamate 49 and aspartate 60.

Belongs to the TrpA family. In terms of assembly, tetramer of two alpha and two beta chains.

The enzyme catalyses (1S,2R)-1-C-(indol-3-yl)glycerol 3-phosphate + L-serine = D-glyceraldehyde 3-phosphate + L-tryptophan + H2O. The protein operates within amino-acid biosynthesis; L-tryptophan biosynthesis; L-tryptophan from chorismate: step 5/5. In terms of biological role, the alpha subunit is responsible for the aldol cleavage of indoleglycerol phosphate to indole and glyceraldehyde 3-phosphate. This Shigella flexneri serotype 5b (strain 8401) protein is Tryptophan synthase alpha chain.